The following is a 929-amino-acid chain: Patatin-like phospholipase domain-containing protein CNE02340 (929 aa).

Positions 37–85 (QPLDGDSSPLSPRSFSLPPESPQLSTASVKAPPPTWKYGPDNGTLRSGR) are disordered. Low complexity predominate over residues 43–54 (SSPLSPRSFSLP). The chain crosses the membrane as a helical span at residues 126-146 (WPLLFFIFFIIYLEFSAYVIT). The PNPLA domain maps to 301–493 (LCLSGGASFG…REDIPLGSLH (193 aa)). The GXSXG motif lies at 332–336 (GTSAG). The Nucleophile role is filled by serine 334. Aspartate 480 functions as the Proton acceptor in the catalytic mechanism. 3 disordered regions span residues 644–765 (ALSH…NFGD), 778–806 (LSSP…QRFR), and 818–929 (VSES…QDGA). Polar residues-rich tracts occupy residues 652-664 (NDPA…TNPE) and 745-764 (PTHS…SNFG). The segment covering 779–806 (SSPFRSIRSNTSSSSNNVQSPSSSQRFR) has biased composition (low complexity). A compositionally biased stretch (basic and acidic residues) spans 856 to 878 (VESHSDRSEDEMLHSGANVKEEY).

Belongs to the PLPL family.

It is found in the membrane. Functionally, probable lipid hydrolase. This chain is Patatin-like phospholipase domain-containing protein CNE02340, found in Cryptococcus neoformans var. neoformans serotype D (strain JEC21 / ATCC MYA-565) (Filobasidiella neoformans).